The chain runs to 154 residues: 6,7-dimethyl-8-ribityllumazine synthase (154 aa).

5-amino-6-(D-ribitylamino)uracil-binding positions include Phe-22, 56 to 58, and 81 to 83; these read AFE and VLI. (2S)-2-hydroxy-3-oxobutyl phosphate is bound at residue 86–87; that stretch reads ET. Catalysis depends on His-89, which acts as the Proton donor. A 5-amino-6-(D-ribitylamino)uracil-binding site is contributed by Leu-114. Arg-128 is a (2S)-2-hydroxy-3-oxobutyl phosphate binding site.

It belongs to the DMRL synthase family.

The catalysed reaction is (2S)-2-hydroxy-3-oxobutyl phosphate + 5-amino-6-(D-ribitylamino)uracil = 6,7-dimethyl-8-(1-D-ribityl)lumazine + phosphate + 2 H2O + H(+). It functions in the pathway cofactor biosynthesis; riboflavin biosynthesis; riboflavin from 2-hydroxy-3-oxobutyl phosphate and 5-amino-6-(D-ribitylamino)uracil: step 1/2. Functionally, catalyzes the formation of 6,7-dimethyl-8-ribityllumazine by condensation of 5-amino-6-(D-ribitylamino)uracil with 3,4-dihydroxy-2-butanone 4-phosphate. This is the penultimate step in the biosynthesis of riboflavin. The sequence is that of 6,7-dimethyl-8-ribityllumazine synthase from Chlamydia pneumoniae (Chlamydophila pneumoniae).